The chain runs to 610 residues: Elongation factor 4 (610 aa).

Residues 14 to 198 (ANIRNFSIVA…AIVTRLPPPQ (185 aa)) form the tr-type G domain. Residues 26 to 31 (DHGKST) and 145 to 148 (NKVD) each bind GTP.

Belongs to the TRAFAC class translation factor GTPase superfamily. Classic translation factor GTPase family. LepA subfamily.

The protein localises to the cell inner membrane. It catalyses the reaction GTP + H2O = GDP + phosphate + H(+). Functionally, required for accurate and efficient protein synthesis under certain stress conditions. May act as a fidelity factor of the translation reaction, by catalyzing a one-codon backward translocation of tRNAs on improperly translocated ribosomes. Back-translocation proceeds from a post-translocation (POST) complex to a pre-translocation (PRE) complex, thus giving elongation factor G a second chance to translocate the tRNAs correctly. Binds to ribosomes in a GTP-dependent manner. The protein is Elongation factor 4 of Nitrobacter hamburgensis (strain DSM 10229 / NCIMB 13809 / X14).